Reading from the N-terminus, the 1415-residue chain is G8 domain-containing protein DDB_G0278975 (1415 aa).

The N-terminal stretch at 1–24 is a signal peptide; the sequence is MKINKIILFFFLSCLYLFSSSVSA. 2 helical membrane passes run 107–127 and 138–158; these read INLN…GLFT and LLFI…SIKI. N-linked (GlcNAc...) asparagine glycosylation is found at N245, N366, N428, N466, and N579. One can recognise a G8 domain in the interval 566–692; that stretch reads STWPNGIIPS…YHNTWSKLSA (127 aa). PbH1 repeat units lie at residues 819–841 and 842–864; these read LKNS…TIHG and TNNV…YLED. N-linked (GlcNAc...) asparagine glycosylation is found at N844, N985, N1009, N1023, N1099, N1244, and N1342.

It belongs to the comF family.

Its subcellular location is the membrane. This chain is G8 domain-containing protein DDB_G0278975, found in Dictyostelium discoideum (Social amoeba).